A 189-amino-acid polypeptide reads, in one-letter code: Transcription factor FapR (189 aa).

The protein belongs to the FapR family.

Functionally, transcriptional factor involved in regulation of membrane lipid biosynthesis by repressing genes involved in fatty acid and phospholipid metabolism. In Listeria monocytogenes serotype 4a (strain HCC23), this protein is Transcription factor FapR.